The primary structure comprises 88 residues: Translation initiation factor IF-1 1 (88 aa).

The S1-like domain maps to 1 to 72 (MSKEDMIELE…TKGRINFRHP (72 aa)). Positions 66-88 (RINFRHPTANPGAGPRPSHHHRR) are disordered.

It belongs to the IF-1 family. In terms of assembly, component of the 30S ribosomal translation pre-initiation complex which assembles on the 30S ribosome in the order IF-2 and IF-3, IF-1 and N-formylmethionyl-tRNA(fMet); mRNA recruitment can occur at any time during PIC assembly.

The protein localises to the cytoplasm. One of the essential components for the initiation of protein synthesis. Stabilizes the binding of IF-2 and IF-3 on the 30S subunit to which N-formylmethionyl-tRNA(fMet) subsequently binds. Helps modulate mRNA selection, yielding the 30S pre-initiation complex (PIC). Upon addition of the 50S ribosomal subunit IF-1, IF-2 and IF-3 are released leaving the mature 70S translation initiation complex. This Chromobacterium violaceum (strain ATCC 12472 / DSM 30191 / JCM 1249 / CCUG 213 / NBRC 12614 / NCIMB 9131 / NCTC 9757 / MK) protein is Translation initiation factor IF-1 1.